Reading from the N-terminus, the 156-residue chain is uncharacterized protein (156 aa).

The next 5 helical transmembrane spans lie at 6–26, 34–54, 68–88, 100–120, and 129–149; these read LIVL…PYFA, FWKF…HQMP, CARC…YPFI, WYLI…LIGL, and FITG…IFFE.

The protein localises to the cell membrane. This is an uncharacterized protein from Methanocaldococcus jannaschii (strain ATCC 43067 / DSM 2661 / JAL-1 / JCM 10045 / NBRC 100440) (Methanococcus jannaschii).